The sequence spans 254 residues: Sugar fermentation stimulation protein homolog (254 aa).

The protein belongs to the SfsA family.

This is Sugar fermentation stimulation protein homolog from Parasynechococcus marenigrum (strain WH8102).